The following is a 448-amino-acid chain: MNLFRQIPKVDKIEKALTHIPKKVLTPIIQKTLNEIREGIKNGKITQINEEDIVKTIEKRSEEILSPSIVNVINATGITVHTNLGRSLIDPEIFDYAKKRSTHYCNLEYDLEKGKRGDRYHHSAKILSHLFGSESALIVNNNAAAVFLILNTFAKDKEAIVSRGELVEIGGSFRVPEVMKASGAKLVEVGTTNKTKIQDYEDAITEDTAMLMKVHKSNYSIEGFSAEASLEEIIELAHKKNVLDYYDLGSAYIPKLPYSLTNYEPPISEIMKLNPSLVSFSGDKLFGSVQAGIILGKKDLIDKLKKNQILRMFRVDKITLSLIEATALAYIKEEYDKIPTLKSIFQTTEALKEKAKKLLSLTPGLKAEIKESHTYVGGGTMPNRKIPTVVVEIKGNAKKWEEDMRKHLVIGRIENEKFVLDMRSVQEDEIEKLAQIINSIITCEVKDA.

At Lys284 the chain carries N6-(pyridoxal phosphate)lysine.

The protein belongs to the SelA family. The cofactor is pyridoxal 5'-phosphate.

The protein localises to the cytoplasm. The catalysed reaction is L-seryl-tRNA(Sec) + selenophosphate + H(+) = L-selenocysteinyl-tRNA(Sec) + phosphate. The protein operates within aminoacyl-tRNA biosynthesis; selenocysteinyl-tRNA(Sec) biosynthesis; selenocysteinyl-tRNA(Sec) from L-seryl-tRNA(Sec) (bacterial route): step 1/1. Functionally, converts seryl-tRNA(Sec) to selenocysteinyl-tRNA(Sec) required for selenoprotein biosynthesis. This chain is L-seryl-tRNA(Sec) selenium transferase, found in Nautilia profundicola (strain ATCC BAA-1463 / DSM 18972 / AmH).